Reading from the N-terminus, the 432-residue chain is Glutamyl-tRNA reductase (432 aa).

Substrate-binding positions include 49-52 (TCNR), S101, 106-108 (ESQ), and Q112. C50 functions as the Nucleophile in the catalytic mechanism. Residue 181–186 (GAGETI) participates in NADP(+) binding. Residues 410 to 432 (KPGYHHPTLQTTIVKTDETDPAS) form a disordered region.

The protein belongs to the glutamyl-tRNA reductase family. Homodimer.

The enzyme catalyses (S)-4-amino-5-oxopentanoate + tRNA(Glu) + NADP(+) = L-glutamyl-tRNA(Glu) + NADPH + H(+). It participates in porphyrin-containing compound metabolism; protoporphyrin-IX biosynthesis; 5-aminolevulinate from L-glutamyl-tRNA(Glu): step 1/2. Functionally, catalyzes the NADPH-dependent reduction of glutamyl-tRNA(Glu) to glutamate 1-semialdehyde (GSA). In Xylella fastidiosa (strain M23), this protein is Glutamyl-tRNA reductase.